A 340-amino-acid chain; its full sequence is Phosphate acyltransferase (340 aa).

This sequence belongs to the PlsX family. In terms of assembly, homodimer. Probably interacts with PlsY.

The protein localises to the cytoplasm. It carries out the reaction a fatty acyl-[ACP] + phosphate = an acyl phosphate + holo-[ACP]. It participates in lipid metabolism; phospholipid metabolism. Its function is as follows. Catalyzes the reversible formation of acyl-phosphate (acyl-PO(4)) from acyl-[acyl-carrier-protein] (acyl-ACP). This enzyme utilizes acyl-ACP as fatty acyl donor, but not acyl-CoA. In Trichodesmium erythraeum (strain IMS101), this protein is Phosphate acyltransferase.